The primary structure comprises 435 residues: 5'-deoxyadenosine deaminase (435 aa).

Residues H64 and H66 each coordinate Zn(2+). Substrate contacts are provided by E93 and H185. H212 provides a ligand contact to Zn(2+). Substrate is bound by residues E215 and D300. D300 provides a ligand contact to Zn(2+).

The protein belongs to the metallo-dependent hydrolases superfamily. MTA/SAH deaminase family. As to quaternary structure, homotetramer. Requires Zn(2+) as cofactor.

It catalyses the reaction 5'-deoxyadenosine + H2O + H(+) = 5'-deoxyinosine + NH4(+). The catalysed reaction is S-adenosyl-L-homocysteine + H2O + H(+) = S-inosyl-L-homocysteine + NH4(+). The enzyme catalyses S-methyl-5'-thioadenosine + H2O + H(+) = S-methyl-5'-thioinosine + NH4(+). It carries out the reaction adenosine + H2O + H(+) = inosine + NH4(+). It functions in the pathway amino-acid biosynthesis; S-adenosyl-L-methionine biosynthesis. Functionally, catalyzes the deamination of three SAM-derived enzymatic products, namely 5'-deoxyadenosine, S-adenosyl-L-homocysteine, and 5'-methylthioadenosine, to produce the inosine analogs. Can also deaminate adenosine. The preferred substrate for this enzyme is 5'-deoxyadenosine, but all these substrates are efficiently deaminated. Likely functions in a S-adenosyl-L-methionine (SAM) recycling pathway from S-adenosyl-L-homocysteine (SAH) produced from SAM-dependent methylation reactions. May also be involved in the recycling of 5'-deoxyadenosine, whereupon the 5'-deoxyribose moiety of 5'-deoxyinosine is further metabolized to deoxyhexoses used for the biosynthesis of aromatic amino acids in methanogens. This is 5'-deoxyadenosine deaminase from Methanobrevibacter smithii (strain ATCC 35061 / DSM 861 / OCM 144 / PS).